We begin with the raw amino-acid sequence, 229 residues long: NAD(P)H-hydrate epimerase (229 aa).

Positions 11–222 constitute a YjeF N-terminal domain; sequence YAAADIRAAE…DVGLDLSGAT (212 aa). Position 59-63 (59-63) interacts with (6S)-NADPHX; that stretch reads NNGGD. Residues asparagine 60 and aspartate 124 each coordinate K(+). (6S)-NADPHX contacts are provided by residues 128–136 and aspartate 164; that span reads GIGTTASPA. Serine 167 serves as a coordination point for K(+).

The protein belongs to the NnrE/AIBP family. K(+) serves as cofactor.

It catalyses the reaction (6R)-NADHX = (6S)-NADHX. It carries out the reaction (6R)-NADPHX = (6S)-NADPHX. Catalyzes the epimerization of the S- and R-forms of NAD(P)HX, a damaged form of NAD(P)H that is a result of enzymatic or heat-dependent hydration. This is a prerequisite for the S-specific NAD(P)H-hydrate dehydratase to allow the repair of both epimers of NAD(P)HX. In Clavibacter sepedonicus (Clavibacter michiganensis subsp. sepedonicus), this protein is NAD(P)H-hydrate epimerase.